The sequence spans 218 residues: Thiopurine S-methyltransferase (218 aa).

Trp10, Leu45, Glu66, and Arg123 together coordinate S-adenosyl-L-methionine.

This sequence belongs to the class I-like SAM-binding methyltransferase superfamily. TPMT family.

The protein resides in the cytoplasm. It catalyses the reaction S-adenosyl-L-methionine + a thiopurine = S-adenosyl-L-homocysteine + a thiopurine S-methylether.. The sequence is that of Thiopurine S-methyltransferase from Shewanella sp. (strain MR-7).